The chain runs to 261 residues: Cytochrome c oxidase subunit 3 (261 aa).

Residues 1–15 are Mitochondrial matrix-facing; it reads MAHQAHSYHMVDPSP. Residues 16 to 34 traverse the membrane as a helical segment; that stretch reads WPIFGAITALLTTSGLIMW. Over 35–40 the chain is Mitochondrial intermembrane; the sequence is FHYNSI. A helical membrane pass occupies residues 41-66; the sequence is ALLTAGLLSMLLVMIQWWRDVVREST. The Mitochondrial matrix segment spans residues 67–72; sequence FQGHHT. A helical membrane pass occupies residues 73 to 105; that stretch reads PTVQKGLRYGMILFITSEAFFFLGFFWAFFHSS. Topologically, residues 106–128 are mitochondrial intermembrane; it reads LAPTPELGGQWPPTGIKPLNPLE. The helical transmembrane segment at 129-152 threads the bilayer; sequence VPLLNTAILLASGVTVTWAHHSIT. Residues 153 to 155 lie on the Mitochondrial matrix side of the membrane; sequence EGN. Residues 156–183 form a helical membrane-spanning segment; that stretch reads RKQAIHALTLTILLGFYFTALQAMEYHE. The Mitochondrial intermembrane portion of the chain corresponds to 184–190; the sequence is ASFSIAD. The chain crosses the membrane as a helical span at residues 191–223; it reads SVYGSTFFVATGFHGLHVIIGSSFLTICLLRLI. Residues 224-232 lie on the Mitochondrial matrix side of the membrane; sequence KFHFTSNHH. Residues 233 to 256 traverse the membrane as a helical segment; it reads FGFEAAAWYWHFVDIIWLFLYMSM. The Mitochondrial intermembrane portion of the chain corresponds to 257 to 261; that stretch reads YWWGS.

The protein belongs to the cytochrome c oxidase subunit 3 family. In terms of assembly, component of the cytochrome c oxidase (complex IV, CIV), a multisubunit enzyme composed of 14 subunits. The complex is composed of a catalytic core of 3 subunits MT-CO1, MT-CO2 and MT-CO3, encoded in the mitochondrial DNA, and 11 supernumerary subunits COX4I, COX5A, COX5B, COX6A, COX6B, COX6C, COX7A, COX7B, COX7C, COX8 and NDUFA4, which are encoded in the nuclear genome. The complex exists as a monomer or a dimer and forms supercomplexes (SCs) in the inner mitochondrial membrane with NADH-ubiquinone oxidoreductase (complex I, CI) and ubiquinol-cytochrome c oxidoreductase (cytochrome b-c1 complex, complex III, CIII), resulting in different assemblies (supercomplex SCI(1)III(2)IV(1) and megacomplex MCI(2)III(2)IV(2)).

Its subcellular location is the mitochondrion inner membrane. The catalysed reaction is 4 Fe(II)-[cytochrome c] + O2 + 8 H(+)(in) = 4 Fe(III)-[cytochrome c] + 2 H2O + 4 H(+)(out). In terms of biological role, component of the cytochrome c oxidase, the last enzyme in the mitochondrial electron transport chain which drives oxidative phosphorylation. The respiratory chain contains 3 multisubunit complexes succinate dehydrogenase (complex II, CII), ubiquinol-cytochrome c oxidoreductase (cytochrome b-c1 complex, complex III, CIII) and cytochrome c oxidase (complex IV, CIV), that cooperate to transfer electrons derived from NADH and succinate to molecular oxygen, creating an electrochemical gradient over the inner membrane that drives transmembrane transport and the ATP synthase. Cytochrome c oxidase is the component of the respiratory chain that catalyzes the reduction of oxygen to water. Electrons originating from reduced cytochrome c in the intermembrane space (IMS) are transferred via the dinuclear copper A center (CU(A)) of subunit 2 and heme A of subunit 1 to the active site in subunit 1, a binuclear center (BNC) formed by heme A3 and copper B (CU(B)). The BNC reduces molecular oxygen to 2 water molecules using 4 electrons from cytochrome c in the IMS and 4 protons from the mitochondrial matrix. The polypeptide is Cytochrome c oxidase subunit 3 (MT-CO3) (Coturnix japonica (Japanese quail)).